The chain runs to 428 residues: Trigger factor (428 aa).

The PPIase FKBP-type domain maps to 163–248 (GDMVVIDYKG…VHEIKEKELP (86 aa)).

Belongs to the FKBP-type PPIase family. Tig subfamily.

It localises to the cytoplasm. The enzyme catalyses [protein]-peptidylproline (omega=180) = [protein]-peptidylproline (omega=0). Its function is as follows. Involved in protein export. Acts as a chaperone by maintaining the newly synthesized protein in an open conformation. Functions as a peptidyl-prolyl cis-trans isomerase. In Alkaliphilus metalliredigens (strain QYMF), this protein is Trigger factor.